A 288-amino-acid polypeptide reads, in one-letter code: Proteasome subunit beta (288 aa).

Positions 1–57 (MTAGDPMRLHPGHALSSFTEHLRALAPELLGPNRFAALDGATGSSGGTGAKDIAPHG) are cleaved as a propeptide — removed in mature form; by autocatalysis. The active-site Nucleophile is T58.

This sequence belongs to the peptidase T1B family. The 20S proteasome core is composed of 14 alpha and 14 beta subunits that assemble into four stacked heptameric rings, resulting in a barrel-shaped structure. The two inner rings, each composed of seven catalytic beta subunits, are sandwiched by two outer rings, each composed of seven alpha subunits. The catalytic chamber with the active sites is on the inside of the barrel. Has a gated structure, the ends of the cylinder being occluded by the N-termini of the alpha-subunits. Is capped by the proteasome-associated ATPase, ARC.

The protein localises to the cytoplasm. It catalyses the reaction Cleavage of peptide bonds with very broad specificity.. Its pathway is protein degradation; proteasomal Pup-dependent pathway. The formation of the proteasomal ATPase ARC-20S proteasome complex, likely via the docking of the C-termini of ARC into the intersubunit pockets in the alpha-rings, may trigger opening of the gate for substrate entry. Interconversion between the open-gate and close-gate conformations leads to a dynamic regulation of the 20S proteasome proteolysis activity. Functionally, component of the proteasome core, a large protease complex with broad specificity involved in protein degradation. The protein is Proteasome subunit beta of Nocardia farcinica (strain IFM 10152).